An 838-amino-acid polypeptide reads, in one-letter code: G-protein coupled receptor-associated sorting protein 2 (838 aa).

4 disordered regions span residues 1-122, 218-292, 349-368, and 531-552; these read MTGA…GARP, ASNE…SNPF, RFRH…RAQK, and LELS…PSPE. Residues 13-31 show a composition bias toward basic and acidic residues; it reads KPEKKAGEEVIAGPEREND. Over residues 220–245 the composition is skewed to polar residues; sequence NESGFWSADETSTASSFWTGEETSVR. Basic residues predominate over residues 255-271; that stretch reads RSRHRAKHQTNPRSRPR. Residues Ser282 and Ser284 each carry the phosphoserine modification. Residues 542–552 are compositionally biased toward polar residues; sequence SLLQPDQPSPE.

Belongs to the GPRASP family. In terms of assembly, interacts with cytoplasmic tails of a variety of G-protein coupled receptors such as muscarinic acetylcholine receptor M1/CHRM1 and calcitonin receptor/CALCR. As to expression, expressed in the brain.

In terms of biological role, may play a role in regulation of a variety of G-protein coupled receptors. This Homo sapiens (Human) protein is G-protein coupled receptor-associated sorting protein 2 (GPRASP2).